Reading from the N-terminus, the 231-residue chain is 5'-methylthioadenosine/S-adenosylhomocysteine nucleosidase (231 aa).

The Proton acceptor role is filled by Glu-12. Substrate contacts are provided by residues Gly-78, Val-153, and 174 to 175 (ME). Asp-198 (proton donor) is an active-site residue.

Belongs to the PNP/UDP phosphorylase family. MtnN subfamily.

The enzyme catalyses S-adenosyl-L-homocysteine + H2O = S-(5-deoxy-D-ribos-5-yl)-L-homocysteine + adenine. It carries out the reaction S-methyl-5'-thioadenosine + H2O = 5-(methylsulfanyl)-D-ribose + adenine. The catalysed reaction is 5'-deoxyadenosine + H2O = 5-deoxy-D-ribose + adenine. It participates in amino-acid biosynthesis; L-methionine biosynthesis via salvage pathway; S-methyl-5-thio-alpha-D-ribose 1-phosphate from S-methyl-5'-thioadenosine (hydrolase route): step 1/2. Catalyzes the irreversible cleavage of the glycosidic bond in both 5'-methylthioadenosine (MTA) and S-adenosylhomocysteine (SAH/AdoHcy) to adenine and the corresponding thioribose, 5'-methylthioribose and S-ribosylhomocysteine, respectively. Also cleaves 5'-deoxyadenosine, a toxic by-product of radical S-adenosylmethionine (SAM) enzymes, into 5-deoxyribose and adenine. In Aliivibrio fischeri (Vibrio fischeri), this protein is 5'-methylthioadenosine/S-adenosylhomocysteine nucleosidase.